We begin with the raw amino-acid sequence, 239 residues long: Ribulose-1,5-bisphosphate 5-phosphatase (239 aa).

Asp-8 serves as the catalytic Nucleophile. Mg(2+) is bound by residues Asp-8, Asp-10, and Asp-184. The active-site Proton donor is Asp-10. The tract at residues 205–239 (PSEESDATESADRAATERQADHSIDTLGELTDLVS) is disordered. The segment covering 214–228 (SADRAATERQADHSI) has biased composition (basic and acidic residues).

The protein belongs to the HAD-like hydrolase superfamily. Requires Mg(2+) as cofactor. Mn(2+) is required as a cofactor. Co(2+) serves as cofactor. The cofactor is Ni(2+).

It carries out the reaction D-ribulose 1,5-bisphosphate + H2O = D-ribulose 1-phosphate + phosphate. Requires both monovalent and divalent ions for optimal activity. Optimal KCl concentration is higher than 2.5 M. Phosphatase involved in the non-carboxylating pentose bisphosphate pathway, a nucleoside degradation pathway present in some halophilic archaea. Catalyzes the dephosphorylation of ribulose 1,5-bisphosphate (RuBP) to ribulose 1-phosphate (Ru1P). Shows a strict substrate specificity toward RuBP. The protein is Ribulose-1,5-bisphosphate 5-phosphatase of Halopiger xanaduensis (strain DSM 18323 / JCM 14033 / SH-6).